The following is a 406-amino-acid chain: NAD(P)H-quinone oxidoreductase subunit H, organellar chromatophore (406 aa).

This sequence belongs to the complex I 49 kDa subunit family. As to quaternary structure, NDH is composed of at least 16 different subunits, 5 of which are encoded in the nucleus.

It is found in the plastid. The protein localises to the organellar chromatophore thylakoid membrane. The enzyme catalyses a quinone + NADH + H(+) = a quinol + NAD(+). Functionally, NDH shuttles electrons from NAD(P)H:plastoquinone, via FMN and iron-sulfur (Fe-S) centers, to quinones in the photosynthetic chain and possibly in a chloroplast respiratory chain. The immediate electron acceptor for the enzyme in this species is believed to be plastoquinone. Couples the redox reaction to proton translocation, and thus conserves the redox energy in a proton gradient. This Paulinella chromatophora protein is NAD(P)H-quinone oxidoreductase subunit H, organellar chromatophore.